The sequence spans 351 residues: Keratocan (351 aa).

The first 20 residues, 1–20, serve as a signal peptide directing secretion; it reads MATPNCLILWVLLIADTVWT. In terms of domain architecture, LRRNT spans 34 to 72; the sequence is DWDVHDDFYCPRECFCPPSFPTALYCENRGLTEIPPIPS. 2 cysteine pairs are disulfide-bonded: Cys43–Cys49 and Cys47–Cys59. LRR repeat units follow at residues 73–94, 97–118, 123–143, 144–165, 168–181, 194–214, 215–236, 239–259, 264–283, and 284–305; these read RIWY…PFEN, QLRW…KGAL, KLLF…PLPR, SLEQ…TFSN, NLTL…KLLD, NLMQ…RLPA, NTMQ…YFNV, KVAF…PSRG, SILD…RINA, and NLQH…VICP. An N-linked (GlcNAc...) (keratan sulfate) asparagine glycan is attached at Asn94. N-linked (GlcNAc...) (keratan sulfate) asparagine glycosylation occurs at Asn168. N-linked (GlcNAc...) asparagine glycosylation is present at Asn223. A glycan (N-linked (GlcNAc...) asparagine) is linked at Asn299. A disulfide bridge connects residues Cys304 and Cys342.

It belongs to the small leucine-rich proteoglycan (SLRP) family. SLRP class II subfamily. Binds keratan sulfate chains. Selectively expressed in cornea of adult where it is detected in keratocytes but not in scleral cells. In embryo, first detected in periocular mesenchymal cells migrating toward developing cornea on 13.5 dpc; expression gradually restricted to corneal stromal cells on 14.5 to 18.5 dpc. Detected in scleral cells of 15.5 dpc but not in 18.5 dpc embryos.

The protein resides in the secreted. It localises to the extracellular space. The protein localises to the extracellular matrix. May be important in developing and maintaining corneal transparency and for the structure of the stromal matrix. In Mus musculus (Mouse), this protein is Keratocan (Kera).